The primary structure comprises 166 residues: uncharacterized protein (166 aa).

To M.jannaschii MJ0992.

This is an uncharacterized protein from Methanocaldococcus jannaschii (strain ATCC 43067 / DSM 2661 / JAL-1 / JCM 10045 / NBRC 100440) (Methanococcus jannaschii).